The primary structure comprises 72 residues: Exodeoxyribonuclease 7 small subunit (72 aa).

The protein belongs to the XseB family. In terms of assembly, heterooligomer composed of large and small subunits.

It is found in the cytoplasm. The catalysed reaction is Exonucleolytic cleavage in either 5'- to 3'- or 3'- to 5'-direction to yield nucleoside 5'-phosphates.. In terms of biological role, bidirectionally degrades single-stranded DNA into large acid-insoluble oligonucleotides, which are then degraded further into small acid-soluble oligonucleotides. In Ruegeria pomeroyi (strain ATCC 700808 / DSM 15171 / DSS-3) (Silicibacter pomeroyi), this protein is Exodeoxyribonuclease 7 small subunit.